Consider the following 428-residue polypeptide: Palmitoyltransferase pfa4 (428 aa).

Over 1–10 (MLCRSFNISQ) the chain is Cytoplasmic. Residues 11–31 (LAIPFVSVLISFLAYTSQLFF) traverse the membrane as a helical segment. The Lumenal portion of the chain corresponds to 32–43 (YYFEEAPLRSEE). A helical transmembrane segment spans residues 44–61 (FWRLNIFAVCIWVCYYRA). Residues 62 to 134 (CTVDPGRIPK…SNCVSHFTYP (73 aa)) are Cytoplasmic-facing. The DHHC domain maps to 91–141 (RWCRRCEAFKPPRAHHCKTCQRCIPKMDHHCPWTSNCVSHFTYPHFMRFLF). Cysteine 121 (S-palmitoyl cysteine intermediate) is an active-site residue. Residues 135-155 (HFMRFLFYAVVGMGYLETLLF) traverse the membrane as a helical segment. At 156–177 (ERASIVWASRHLPSYLGPGLGQ) the chain is on the lumenal side. Residues 178 to 198 (LVHLFILLVVNSLTWLALFIL) form a helical membrane-spanning segment. The Cytoplasmic portion of the chain corresponds to 199-428 (LLRSIWSLAL…GILMQRRRQQ (230 aa)). Residues 339 to 400 (QRSNDASHSG…WKNSEGDRLR (62 aa)) form a disordered region. Basic and acidic residues predominate over residues 360–373 (DRFNENKAKERLSE). The segment covering 374 to 388 (SESDFSDDEEVQDGE) has biased composition (acidic residues). Positions 389 to 400 (EGWKNSEGDRLR) are enriched in basic and acidic residues.

The protein belongs to the DHHC palmitoyltransferase family. PFA4 subfamily.

The protein resides in the endoplasmic reticulum membrane. It catalyses the reaction L-cysteinyl-[protein] + hexadecanoyl-CoA = S-hexadecanoyl-L-cysteinyl-[protein] + CoA. In terms of biological role, mediates the reversible addition of palmitate to target proteins, thereby regulating their membrane association and biological function. The protein is Palmitoyltransferase pfa4 of Aspergillus fumigatus (strain ATCC MYA-4609 / CBS 101355 / FGSC A1100 / Af293) (Neosartorya fumigata).